Here is a 478-residue protein sequence, read N- to C-terminus: Solute carrier family 49 member 4 (478 aa).

Positions 1–27 are disordered; it reads MGSGWSSEEEERQPLLGPGLGPAPGAA. The Cytoplasmic segment spans residues 1–51; the sequence is MGSGWSSEEEERQPLLGPGLGPAPGAARRGREATAVLPAAGPNPGRVYGRR. The Di-leucine motif; mediates lysosomal localization signature appears at 15 to 16; sequence LL. A helical transmembrane segment spans residues 52–72; it reads WLVLLLFSLLAFAQGLVWNTW. Residues 73–89 are Lumenal-facing; sequence GPIQNSARQAYGFSGWD. A helical membrane pass occupies residues 90–110; it reads IALLVLWGPIGFLPCFAFMWL. Residues 111 to 117 are Cytoplasmic-facing; sequence LDKRGLR. The helical transmembrane segment at 118 to 138 threads the bilayer; that stretch reads VTVLLTSFLMVLGTGLRCIPV. The Lumenal portion of the chain corresponds to 139-152; it reads SDLALKKRLIHGGQ. Residues 153-173 traverse the membrane as a helical segment; it reads ILNGLAGPTVMNAAPFLSTTW. The Cytoplasmic portion of the chain corresponds to 174 to 184; that stretch reads FSADERATATA. Residues 185-205 traverse the membrane as a helical segment; it reads IASMLSYLGGACAFLVGPLVV. At 206-229 the chain is on the lumenal side; the sequence is PAPNGTAPLLAAESSRAHIKDRIE. The N-linked (GlcNAc...) asparagine glycan is linked to asparagine 209. Residues 230-250 traverse the membrane as a helical segment; sequence TVLYAEFGVVCLIFSATLAYF. The Cytoplasmic portion of the chain corresponds to 251–281; sequence PPRPPLPPSVAAASQRLSYRRSFCRLLSNLR. Residues 282-302 form a helical membrane-spanning segment; that stretch reads FLMIALAYAIPLGVFAGWSGV. The Lumenal segment spans residues 303-314; that stretch reads LDLILTPVHVSQ. The helical transmembrane segment at 315–335 threads the bilayer; that stretch reads VDAGWIGFWSIVGGCVVGIAM. At 336–347 the chain is on the cytoplasmic side; it reads ARFADFIRGMLK. Residues 348–368 form a helical membrane-spanning segment; that stretch reads LILLLLFSGATLSSTWFTLTC. Residues 369–384 lie on the Lumenal side of the membrane; it reads LNSITHLPLTTVTLYA. A helical membrane pass occupies residues 385-405; it reads SCILLGVFLNSSVPIFFELFV. The Cytoplasmic segment spans residues 406 to 414; it reads ETVYPVPEG. Residues 415-435 form a helical membrane-spanning segment; sequence ITCGVVTFLSNMFMGVLLFFV. The Lumenal segment spans residues 436 to 442; it reads TFYHTEL. A helical membrane pass occupies residues 443–463; that stretch reads SWFNWCLPGSCLLSLLLILCF. At 464–478 the chain is on the cytoplasmic side; that stretch reads RESYDRLYLDVVVSV.

This sequence belongs to the major facilitator superfamily. Cleaved in lysosomes by cathepsin L between Leu-214 and Ala-261, generating a N-glycosylated N-terminal and a non-glycosylated C-terminal fragment.

It is found in the lysosome membrane. It carries out the reaction pyridoxine(out) + n H(+)(out) = pyridoxine(in) + n H(+)(in). In terms of biological role, mediates H(+)-dependent pyridoxine transport. This chain is Solute carrier family 49 member 4 (Slc49a4), found in Mus musculus (Mouse).